The primary structure comprises 673 residues: tRNA uridine 5-carboxymethylaminomethyl modification enzyme MnmG (673 aa).

FAD is bound at residue 17-22 (GGGHAG). Residue 284–298 (GPRYCPSVEDKINRF) coordinates NAD(+).

Belongs to the MnmG family. Homodimer. Heterotetramer of two MnmE and two MnmG subunits. FAD is required as a cofactor.

The protein resides in the cytoplasm. Functionally, NAD-binding protein involved in the addition of a carboxymethylaminomethyl (cmnm) group at the wobble position (U34) of certain tRNAs, forming tRNA-cmnm(5)s(2)U34. This chain is tRNA uridine 5-carboxymethylaminomethyl modification enzyme MnmG, found in Polaromonas sp. (strain JS666 / ATCC BAA-500).